Consider the following 303-residue polypeptide: Coenzyme PQQ synthesis protein B (303 aa).

This sequence belongs to the PqqB family.

It participates in cofactor biosynthesis; pyrroloquinoline quinone biosynthesis. In terms of biological role, may be involved in the transport of PQQ or its precursor to the periplasm. The polypeptide is Coenzyme PQQ synthesis protein B (Acinetobacter baumannii (strain SDF)).